We begin with the raw amino-acid sequence, 508 residues long: Mevalonate kinase ERG12 (508 aa).

The tract at residues 1-46 is disordered; it reads MPPSNPAMVNGLNGSHANGNGNGHNHISDSGSETSGESSNGSGRRR. Residues 10–42 show a composition bias toward low complexity; the sequence is NGLNGSHANGNGNGHNHISDSGSETSGESSNGS. ATP is bound by residues Lys68, Ser200, and 205-211; that span reads GAGLGSS. Residues Ser211 and Glu256 each coordinate Mg(2+). Catalysis depends on Asp267, which acts as the Proton acceptor.

It belongs to the GHMP kinase family. Mevalonate kinase subfamily. Homodimer. Mg(2+) serves as cofactor.

Its subcellular location is the cytoplasm. It is found in the cytosol. It carries out the reaction (R)-mevalonate + ATP = (R)-5-phosphomevalonate + ADP + H(+). It participates in isoprenoid biosynthesis; isopentenyl diphosphate biosynthesis via mevalonate pathway; isopentenyl diphosphate from (R)-mevalonate: step 1/3. Its function is as follows. Mevalonate kinase; part of the second module of ergosterol biosynthesis pathway that includes the middle steps of the pathway. ERG12 converts mevalonate into 5-phosphomevalonate. The second module is carried out in the vacuole and involves the formation of farnesyl diphosphate, which is also an important intermediate in the biosynthesis of ubiquinone, dolichol, heme and prenylated proteins. Activity by the mevalonate kinase ERG12 (FG05912) first converts mevalonate into 5-phosphomevalonate. 5-phosphomevalonate is then further converted to 5-diphosphomevalonate by the phosphomevalonate kinase ERG8 (FG09764). The diphosphomevalonate decarboxylase ERG19 (FG10424) then produces isopentenyl diphosphate. The isopentenyl-diphosphate delta-isomerase IDI1 (FG09722) then catalyzes the 1,3-allylic rearrangement of the homoallylic substrate isopentenyl (IPP) to its highly electrophilic allylic isomer, dimethylallyl diphosphate (DMAPP). Finally the farnesyl diphosphate synthase ERG20 (FG06784) catalyzes the sequential condensation of isopentenyl pyrophosphate with dimethylallyl pyrophosphate, and then with the resultant geranylpyrophosphate to the ultimate product farnesyl pyrophosphate. This Gibberella zeae (strain ATCC MYA-4620 / CBS 123657 / FGSC 9075 / NRRL 31084 / PH-1) (Wheat head blight fungus) protein is Mevalonate kinase ERG12.